Reading from the N-terminus, the 147-residue chain is F420H(2)-dependent reductase Rv1155 (147 aa).

Residues Gln32, Gln37, Ser50, 56–60 (AKTRN), 77–79 (WSY), and His138 each bind coenzyme F420-(gamma-Glu)n.

It belongs to the F420H(2)-dependent biliverdin reductase family. Homodimer.

F420H(2)-dependent reductase able to catalyze the reduction of biliverdin-IXalpha to bilirubin-IXalpha in vitro. However, kinetic parameters show that it is less efficient than the biliverdin reductase Rv2074 and suggest biliverdin-IXalpha is unlikely to be the native substrate of Rv1155, which probably catalyzes the reduction of an alternative molecule in vivo. Binds coenzyme F420, but does not bind FMN or other flavins. Cannot use pyridoxine 5'-phosphate, pyridoxamine 5'-phosphate, pyridoxal 5'-phosphate (PLP), the anti-tuberculosis drug PA-824 or aflatoxin analogs as substrates. This Mycobacterium tuberculosis (strain ATCC 25618 / H37Rv) protein is F420H(2)-dependent reductase Rv1155.